The sequence spans 328 residues: Ketol-acid reductoisomerase (NADP(+)) (328 aa).

Residues 2–181 form the KARI N-terminal Rossmann domain; sequence AKIYRETDAD…GFTRVGVIET (180 aa). NADP(+)-binding positions include 25–28, R48, S52, and 82–85; these read YGIQ and DMVQ. The active site involves H107. G133 lines the NADP(+) pocket. The region spanning 182-327 is the KARI C-terminal knotted domain; the sequence is TFAEETETDL…EDLRRLMRSG (146 aa). Mg(2+) contacts are provided by D190, E194, E226, and E230. S251 is a substrate binding site.

The protein belongs to the ketol-acid reductoisomerase family. Mg(2+) is required as a cofactor.

The enzyme catalyses (2R)-2,3-dihydroxy-3-methylbutanoate + NADP(+) = (2S)-2-acetolactate + NADPH + H(+). It catalyses the reaction (2R,3R)-2,3-dihydroxy-3-methylpentanoate + NADP(+) = (S)-2-ethyl-2-hydroxy-3-oxobutanoate + NADPH + H(+). It functions in the pathway amino-acid biosynthesis; L-isoleucine biosynthesis; L-isoleucine from 2-oxobutanoate: step 2/4. The protein operates within amino-acid biosynthesis; L-valine biosynthesis; L-valine from pyruvate: step 2/4. Functionally, involved in the biosynthesis of branched-chain amino acids (BCAA). Catalyzes an alkyl-migration followed by a ketol-acid reduction of (S)-2-acetolactate (S2AL) to yield (R)-2,3-dihydroxy-isovalerate. In the isomerase reaction, S2AL is rearranged via a Mg-dependent methyl migration to produce 3-hydroxy-3-methyl-2-ketobutyrate (HMKB). In the reductase reaction, this 2-ketoacid undergoes a metal-dependent reduction by NADPH to yield (R)-2,3-dihydroxy-isovalerate. The sequence is that of Ketol-acid reductoisomerase (NADP(+)) from Caldivirga maquilingensis (strain ATCC 700844 / DSM 13496 / JCM 10307 / IC-167).